The primary structure comprises 165 residues: Cyclic pyranopterin monophosphate synthase (165 aa).

Residues 83–85 (FCH) and 120–121 (ME) contribute to the substrate site. Residue D135 is part of the active site.

This sequence belongs to the MoaC family. As to quaternary structure, homohexamer; trimer of dimers.

It carries out the reaction (8S)-3',8-cyclo-7,8-dihydroguanosine 5'-triphosphate = cyclic pyranopterin phosphate + diphosphate. It participates in cofactor biosynthesis; molybdopterin biosynthesis. Functionally, catalyzes the conversion of (8S)-3',8-cyclo-7,8-dihydroguanosine 5'-triphosphate to cyclic pyranopterin monophosphate (cPMP). The chain is Cyclic pyranopterin monophosphate synthase from Xanthomonas campestris pv. campestris (strain 8004).